The sequence spans 130 residues: uncharacterized protein (130 aa).

Residues 19 to 73 form the HTH cro/C1-type domain; the sequence is IYSLRLAKGLSRQQLAEVIDVTHQQLQKYEKAINRISVGRLVLIAEALDRNIDYF. Residues 30–49 constitute a DNA-binding region (H-T-H motif); that stretch reads RQQLAEVIDVTHQQLQKYEK.

This is an uncharacterized protein from Rickettsia prowazekii (strain Madrid E).